The chain runs to 468 residues: Argininosuccinate lyase (468 aa).

Belongs to the lyase 1 family. Argininosuccinate lyase subfamily.

It localises to the cytoplasm. The enzyme catalyses 2-(N(omega)-L-arginino)succinate = fumarate + L-arginine. The protein operates within amino-acid biosynthesis; L-arginine biosynthesis; L-arginine from L-ornithine and carbamoyl phosphate: step 3/3. The polypeptide is Argininosuccinate lyase (Gloeobacter violaceus (strain ATCC 29082 / PCC 7421)).